The sequence spans 416 residues: Diaminobutyrate--2-oxoglutarate transaminase (416 aa).

Lys-263 is modified (N6-(pyridoxal phosphate)lysine).

Belongs to the class-III pyridoxal-phosphate-dependent aminotransferase family. Pyridoxal 5'-phosphate is required as a cofactor.

The enzyme catalyses L-2,4-diaminobutanoate + 2-oxoglutarate = L-aspartate 4-semialdehyde + L-glutamate. The protein operates within amine and polyamine biosynthesis; ectoine biosynthesis; L-ectoine from L-aspartate 4-semialdehyde: step 1/3. Catalyzes reversively the conversion of L-aspartate beta-semialdehyde (ASA) to L-2,4-diaminobutyrate (DABA) by transamination with L-glutamate. This is Diaminobutyrate--2-oxoglutarate transaminase (ectB) from Virgibacillus pantothenticus.